Consider the following 332-residue polypeptide: DnAJ-like protein slr0093 (332 aa).

Positions 6–75 (FKDYYQILGV…RQKYDQFGRY (70 aa)) constitute a J domain.

The sequence is that of DnAJ-like protein slr0093 from Synechocystis sp. (strain ATCC 27184 / PCC 6803 / Kazusa).